The chain runs to 250 residues: MRRRPGIGGLQKAAAARDQYRLLGENVAKLRTDMMKEQLSTFRSQLEEFARKHKNDIRKNPAFRAQFHEMCANIGVDPLASNKGFWAELLGIGDFYYELGVQIIEVCMLTRSHNGGLISLQELCNHLRQRRKKDREAVTEDDCLRAISKLKVLGSGFEVITIGKKKLVRSVPTELNKDHNQILELAQGQGFVIVEEVQRRLSWTSGRVIDALETLLEEGLAMIDNGHKDGKCRYWFPCVSSVYSSIGSDT.

Residues 35 to 55 adopt a coiled-coil conformation; the sequence is MKEQLSTFRSQLEEFARKHKN.

This sequence belongs to the SNF8 family. Component of the endosomal sorting complex required for transport II (ESCRT-II), composed of VPS22, VPS25 and VPS36.

It is found in the endosome. Component of the endosomal sorting complex required for transport II (ESCRT-II), which is required for multivesicular body (MVB) formation and sorting of endosomal cargo proteins into MVBs. The ESCRT-II complex is probably involved in the recruitment of the ESCRT-III complex. The protein is Vacuolar protein sorting-associated protein 22 homolog 1 (VP22-1) of Arabidopsis thaliana (Mouse-ear cress).